We begin with the raw amino-acid sequence, 466 residues long: Asparagine--tRNA ligase (466 aa).

Belongs to the class-II aminoacyl-tRNA synthetase family. Homodimer.

It is found in the cytoplasm. The catalysed reaction is tRNA(Asn) + L-asparagine + ATP = L-asparaginyl-tRNA(Asn) + AMP + diphosphate + H(+). The sequence is that of Asparagine--tRNA ligase from Shewanella oneidensis (strain ATCC 700550 / JCM 31522 / CIP 106686 / LMG 19005 / NCIMB 14063 / MR-1).